Consider the following 183-residue polypeptide: Large ribosomal subunit protein uL5 (183 aa).

Belongs to the universal ribosomal protein uL5 family. Part of the 50S ribosomal subunit; part of the 5S rRNA/L5/L18/L25 subcomplex. Contacts the 5S rRNA and the P site tRNA. Forms a bridge to the 30S subunit in the 70S ribosome.

In terms of biological role, this is one of the proteins that bind and probably mediate the attachment of the 5S RNA into the large ribosomal subunit, where it forms part of the central protuberance. In the 70S ribosome it contacts protein S13 of the 30S subunit (bridge B1b), connecting the 2 subunits; this bridge is implicated in subunit movement. Contacts the P site tRNA; the 5S rRNA and some of its associated proteins might help stabilize positioning of ribosome-bound tRNAs. The chain is Large ribosomal subunit protein uL5 from Fusobacterium nucleatum subsp. nucleatum (strain ATCC 25586 / DSM 15643 / BCRC 10681 / CIP 101130 / JCM 8532 / KCTC 2640 / LMG 13131 / VPI 4355).